The following is a 380-amino-acid chain: Cytochrome b (380 aa).

Helical transmembrane passes span 34–54 (FGSL…LLAM), 78–99 (WLIR…YLHI), 114–134 (WNTG…GYVL), and 179–199 (FFAL…IHLT). The heme b site is built by His-84 and His-98. The heme b site is built by His-183 and His-197. His-202 serves as a coordination point for a ubiquinone. A run of 4 helical transmembrane segments spans residues 227-247 (LKDA…ALFS), 289-309 (LGGV…PLLH), 321-341 (LSQL…WVGS), and 348-368 (FIII…ILFP).

This sequence belongs to the cytochrome b family. The cytochrome bc1 complex contains 11 subunits: 3 respiratory subunits (MT-CYB, CYC1 and UQCRFS1), 2 core proteins (UQCRC1 and UQCRC2) and 6 low-molecular weight proteins (UQCRH/QCR6, UQCRB/QCR7, UQCRQ/QCR8, UQCR10/QCR9, UQCR11/QCR10 and a cleavage product of UQCRFS1). This cytochrome bc1 complex then forms a dimer. Requires heme b as cofactor.

Its subcellular location is the mitochondrion inner membrane. Component of the ubiquinol-cytochrome c reductase complex (complex III or cytochrome b-c1 complex) that is part of the mitochondrial respiratory chain. The b-c1 complex mediates electron transfer from ubiquinol to cytochrome c. Contributes to the generation of a proton gradient across the mitochondrial membrane that is then used for ATP synthesis. This is Cytochrome b (MT-CYB) from Oceanites oceanicus (Wilson's storm petrel).